A 504-amino-acid polypeptide reads, in one-letter code: Cobyric acid synthase (504 aa).

The GATase cobBQ-type domain maps to 258–454; that stretch reads EIEIAIIKLP…LHGIFENDEW (197 aa). Cysteine 339 serves as the catalytic Nucleophile. Histidine 446 is an active-site residue.

This sequence belongs to the CobB/CobQ family. CobQ subfamily.

The protein operates within cofactor biosynthesis; adenosylcobalamin biosynthesis. Functionally, catalyzes amidations at positions B, D, E, and G on adenosylcobyrinic A,C-diamide. NH(2) groups are provided by glutamine, and one molecule of ATP is hydrogenolyzed for each amidation. The polypeptide is Cobyric acid synthase (Prochlorococcus marinus (strain NATL2A)).